The chain runs to 280 residues: Thymidylate synthase (280 aa).

Position 21 (Arg21) interacts with dUMP. His51 lines the (6R)-5,10-methylene-5,6,7,8-tetrahydrofolate pocket. Arg142–Arg143 contributes to the dUMP binding site. Cys162 functions as the Nucleophile in the catalytic mechanism. Residues Arg182–Asp185, Asn193, and His223–Tyr225 contribute to the dUMP site. Residue Asp185 participates in (6R)-5,10-methylene-5,6,7,8-tetrahydrofolate binding. Ala279 is a binding site for (6R)-5,10-methylene-5,6,7,8-tetrahydrofolate.

The protein belongs to the thymidylate synthase family. Bacterial-type ThyA subfamily. As to quaternary structure, homodimer.

Its subcellular location is the cytoplasm. It carries out the reaction dUMP + (6R)-5,10-methylene-5,6,7,8-tetrahydrofolate = 7,8-dihydrofolate + dTMP. It participates in pyrimidine metabolism; dTTP biosynthesis. In terms of biological role, catalyzes the reductive methylation of 2'-deoxyuridine-5'-monophosphate (dUMP) to 2'-deoxythymidine-5'-monophosphate (dTMP) while utilizing 5,10-methylenetetrahydrofolate (mTHF) as the methyl donor and reductant in the reaction, yielding dihydrofolate (DHF) as a by-product. This enzymatic reaction provides an intracellular de novo source of dTMP, an essential precursor for DNA biosynthesis. This is Thymidylate synthase from Acinetobacter baumannii (strain AB307-0294).